A 433-amino-acid polypeptide reads, in one-letter code: Acetyl-CoA-benzylalcohol acetyltransferase (433 aa).

Active-site proton acceptor residues include His152 and Asp377.

This sequence belongs to the plant acyltransferase family.

It carries out the reaction benzyl alcohol + acetyl-CoA = benzyl acetate + CoA. The enzyme catalyses (E)-cinnamyl alcohol + acetyl-CoA = (E)-cinnamyl acetate + CoA. Its function is as follows. Involved in the biosynthesis of benzyl acetate, a major constituent of the floral scent. Can use benzylalcohol, cinnamylalcohol, 3-cis-hexene-1-ol or heptanol as substrates. Has some activity with 2-phenylethanol and 2-naphtalene-ethanol. This Clarkia breweri (Fairy fans) protein is Acetyl-CoA-benzylalcohol acetyltransferase (BEAT).